A 151-amino-acid polypeptide reads, in one-letter code: Large ribosomal subunit protein bL9 (151 aa).

It belongs to the bacterial ribosomal protein bL9 family.

Its function is as follows. Binds to the 23S rRNA. This chain is Large ribosomal subunit protein bL9, found in Bordetella pertussis (strain Tohama I / ATCC BAA-589 / NCTC 13251).